A 66-amino-acid polypeptide reads, in one-letter code: Cold shock protein CspD (66 aa).

A CSD domain is found at 4–63; the sequence is GKVKWFNNEKGFGFIEVEGGDDVFVHFTAIEGDGYKSLEEGQEVSFEIVEGNRGPQASNV.

It localises to the cytoplasm. This Bacillus subtilis (strain 168) protein is Cold shock protein CspD (cspD).